A 500-amino-acid polypeptide reads, in one-letter code: Aspartyl/glutamyl-tRNA(Asn/Gln) amidotransferase subunit B (500 aa).

This sequence belongs to the GatB/GatE family. GatB subfamily. As to quaternary structure, heterotrimer of A, B and C subunits.

It carries out the reaction L-glutamyl-tRNA(Gln) + L-glutamine + ATP + H2O = L-glutaminyl-tRNA(Gln) + L-glutamate + ADP + phosphate + H(+). The enzyme catalyses L-aspartyl-tRNA(Asn) + L-glutamine + ATP + H2O = L-asparaginyl-tRNA(Asn) + L-glutamate + ADP + phosphate + 2 H(+). In terms of biological role, allows the formation of correctly charged Asn-tRNA(Asn) or Gln-tRNA(Gln) through the transamidation of misacylated Asp-tRNA(Asn) or Glu-tRNA(Gln) in organisms which lack either or both of asparaginyl-tRNA or glutaminyl-tRNA synthetases. The reaction takes place in the presence of glutamine and ATP through an activated phospho-Asp-tRNA(Asn) or phospho-Glu-tRNA(Gln). This is Aspartyl/glutamyl-tRNA(Asn/Gln) amidotransferase subunit B from Rhizobium etli (strain CIAT 652).